The following is a 271-amino-acid chain: Short-chain dehydrogenase ptmH (271 aa).

NADP(+) is bound by residues Ile-8, Thr-34, Lys-40, Asp-56, Asn-84, Tyr-148, Lys-152, Val-181, and Thr-183. The Proton acceptor role is filled by Tyr-148. The active-site Lowers pKa of active site Tyr is the Lys-152.

It belongs to the short-chain dehydrogenases/reductases (SDR) family.

Its pathway is secondary metabolite biosynthesis. Functionally, short-chain dehydrogenase; part of the gene cluster that mediates the biosynthesis of the indole diterpenes penitrems. The geranylgeranyl diphosphate (GGPP) synthase ptmG catalyzes the first step in penitrem biosynthesis via conversion of farnesyl pyrophosphate and isopentyl pyrophosphate into geranylgeranyl pyrophosphate (GGPP). Condensation of indole-3-glycerol phosphate with GGPP by the prenyl transferase ptmC then forms 3-geranylgeranylindole (3-GGI). Epoxidation by the FAD-dependent monooxygenase ptmM leads to a epoxidized-GGI that is substrate of the terpene cyclase ptmB for cyclization to yield paspaline. Paspaline is subsequently converted to 13-desoxypaxilline by the cytochrome P450 monooxygenase ptmP, the latter being then converted to paxilline by the cytochrome P450 monooxygenase ptmQ. Paxilline is converted to beta-paxitriol via C-10 ketoreduction by the short-chain dehydrogenase ptmH which can be monoprenylated at the C-20 by the indole diterpene prenyltransferase ptmD. A two-step elimination (acetylation and elimination) process performed by the O-acetyltransferase ptmV and ptmI leads to the production of the prenylated form of penijanthine. The FAD-linked oxidoreductase ptmO then converts the prenylated form of penijanthine into PC-M5 which is in turn transformed into PC-M4 by the aromatic dimethylallyltransferase ptmE. Five sequential oxidative transformations performed by the cytochrome P450 monooxygenases ptmK, ptmU, ptmL, ptmN and ptmJ yield the various penitrem compounds. PtmK, ptmU and ptmM are involved in the formation of the key bicyclic ring of penitrem C via the formation of the intermediates secopenitrem D and penitrem D. PtmL catalyzes the epoxidation of penitrem D and C to yield penitrem B and F, respectively. PtmJ catalyzes the last benzylic hydroxylation to convert penitrem B to prenitrem E and penitrem F to penitrem A. The sequence is that of Short-chain dehydrogenase ptmH from Penicillium ochrochloron.